A 217-amino-acid chain; its full sequence is Adapter protein MecA (217 aa).

The protein belongs to the MecA family. Homodimer.

Enables the recognition and targeting of unfolded and aggregated proteins to the ClpC protease or to other proteins involved in proteolysis. The polypeptide is Adapter protein MecA (Listeria innocua serovar 6a (strain ATCC BAA-680 / CLIP 11262)).